Here is a 485-residue protein sequence, read N- to C-terminus: MSSPRSNKPKIVNGPGGYILQDVPHLIDYLPDLPTYPNPLQDNPAYSVVKQYFVHADDSVPEKVVVHKDGPRGVHFRRAGPRQKVYFESDEVHACIVTCGGLCPGLNTVIREVVSSLSYMYGVKRILGIDGGYRGFYAKNTIPLNSKVVNDIHKRGGTIIGTSRGGHDTNKIVDSIQDRGINQVYIIGGDGTQRGASVIFEEIRRRRLKVAVVGIPKTIDNDIPVIDKSFGFDTAVEEAQRAINAAHVEAESNENGIGFVKLMGRYSGYIAMYATLASRDVDCCLIPESPFYLEGEGGLFEFIERRLKDHGHMVIVLAEGAGQDLMCKSMESTPMDASGNKLLKDVGLWLSQSIKDHFKKNKMVMNLKYIDPTYMIRAVPSNASDNVYCTLLAQSAVHGAMAGYTGYTSGLVNGRQTYIPFYRITETQNNVVITDRMWARLLSSTNQPSFLGPKDTSEEKKELPETPLLDDGAVDIPPVTKEVTK.

ATP-binding positions include glycine 101, 164–165, and 189–192; these read RG and GDGT. Mg(2+) is bound at residue aspartate 190. Substrate contacts are provided by residues 218–220, 263–265, glutamate 319, and 374–377; these read TID, MGR, and YMIR. Aspartate 220 functions as the Proton acceptor in the catalytic mechanism. The segment at 449–485 is disordered; it reads SFLGPKDTSEEKKELPETPLLDDGAVDIPPVTKEVTK. A compositionally biased stretch (basic and acidic residues) spans 455–464; sequence DTSEEKKELP.

The protein belongs to the phosphofructokinase type A (PFKA) family. PPi-dependent PFK group II subfamily. Atypical ATP-dependent clade 'X' sub-subfamily. As to quaternary structure, homotetramer. Mg(2+) serves as cofactor. Expressed in roots, leaves, stems and flowers.

Its subcellular location is the cytoplasm. It carries out the reaction beta-D-fructose 6-phosphate + ATP = beta-D-fructose 1,6-bisphosphate + ADP + H(+). It participates in carbohydrate degradation; glycolysis; D-glyceraldehyde 3-phosphate and glycerone phosphate from D-glucose: step 3/4. With respect to regulation, allosterically activated by AMP. Functionally, catalyzes the phosphorylation of D-fructose 6-phosphate to fructose 1,6-bisphosphate by ATP, the first committing step of glycolysis. This chain is ATP-dependent 6-phosphofructokinase 7, found in Arabidopsis thaliana (Mouse-ear cress).